Here is a 244-residue protein sequence, read N- to C-terminus: MILIPARLASTRFPRKIVQEILGIPMIVRVAKRAMEVDSTVVASDSLEVVEICRHHGIEAILTSKDHASGTDRIAEAARILELPPHEVILNVQGDEPFLEPEVIASLKEKMQEASLGDSPPFMASAYKKVSQEEASDPNLVKVVLDNHSCALYFSRSPIPFWRDCTESTPLFYRGHLGLYAYTGSSLQAFCALPSSPLEEIEKLEQLRALSHGHKILMIEVETRSFGIDTPQDLNRALKIFGDS.

The protein belongs to the KdsB family.

It is found in the cytoplasm. The enzyme catalyses 3-deoxy-alpha-D-manno-oct-2-ulosonate + CTP = CMP-3-deoxy-beta-D-manno-octulosonate + diphosphate. The protein operates within nucleotide-sugar biosynthesis; CMP-3-deoxy-D-manno-octulosonate biosynthesis; CMP-3-deoxy-D-manno-octulosonate from 3-deoxy-D-manno-octulosonate and CTP: step 1/1. Its pathway is bacterial outer membrane biogenesis; lipopolysaccharide biosynthesis. Its function is as follows. Activates KDO (a required 8-carbon sugar) for incorporation into bacterial lipopolysaccharide in Gram-negative bacteria. This Wolinella succinogenes (strain ATCC 29543 / DSM 1740 / CCUG 13145 / JCM 31913 / LMG 7466 / NCTC 11488 / FDC 602W) (Vibrio succinogenes) protein is 3-deoxy-manno-octulosonate cytidylyltransferase.